The primary structure comprises 341 residues: UDP-3-O-acylglucosamine N-acyltransferase (341 aa).

His241 serves as the catalytic Proton acceptor.

Belongs to the transferase hexapeptide repeat family. LpxD subfamily. In terms of assembly, homotrimer.

The catalysed reaction is a UDP-3-O-[(3R)-3-hydroxyacyl]-alpha-D-glucosamine + a (3R)-hydroxyacyl-[ACP] = a UDP-2-N,3-O-bis[(3R)-3-hydroxyacyl]-alpha-D-glucosamine + holo-[ACP] + H(+). It participates in bacterial outer membrane biogenesis; LPS lipid A biosynthesis. Its function is as follows. Catalyzes the N-acylation of UDP-3-O-acylglucosamine using 3-hydroxyacyl-ACP as the acyl donor. Is involved in the biosynthesis of lipid A, a phosphorylated glycolipid that anchors the lipopolysaccharide to the outer membrane of the cell. The sequence is that of UDP-3-O-acylglucosamine N-acyltransferase from Mannheimia succiniciproducens (strain KCTC 0769BP / MBEL55E).